A 317-amino-acid polypeptide reads, in one-letter code: Melanocyte-stimulating hormone receptor (317 aa).

Topologically, residues 1 to 37 (MPVQGSQRRLLGSLNSTPTATPHLGLAANQTGARCLE) are extracellular. Asparagine 29 is a glycosylation site (N-linked (GlcNAc...) asparagine). Residues 38–63 (VSIPDGLFLSLGLVSLVENVLVVTAI) form a helical membrane-spanning segment. Topologically, residues 64-72 (AKNRNLHSP) are cytoplasmic. The chain crosses the membrane as a helical span at residues 73–93 (MYCFICCLALSDLLVSGSNML). The Extracellular segment spans residues 94–118 (ETAVILLLEAGALAARAAVVQQLDN). The helical transmembrane segment at 119–140 (VIDVITCSSMLSSLCFLGAIAV) threads the bilayer. Residues 141 to 163 (DRYISIFYALRYHSIVTLPRARR) are Cytoplasmic-facing. A helical membrane pass occupies residues 164–183 (AVAAIWVASVLFSMLFIAYY). The Extracellular portion of the chain corresponds to 184–191 (DHAAVLLC). The chain crosses the membrane as a helical span at residues 192-211 (LVVFFLAMLVLMAVLYVHML). Residues 212–240 (ARACQHAQGIARLHKRQCPAHQGFGLKGA) lie on the Cytoplasmic side of the membrane. A helical membrane pass occupies residues 241–266 (ATLTILLGIFFLCWGPFFLHLTLIVL). At 267 to 279 (CPQHPTCSCIFKN) the chain is on the extracellular side. Residues 280 to 300 (FNLFLALIICNAIIDPLIYAF) form a helical membrane-spanning segment. Over 301–317 (RSQELRRTLKEVLLCSW) the chain is Cytoplasmic. The S-palmitoyl cysteine moiety is linked to residue cysteine 315.

Belongs to the G-protein coupled receptor 1 family. Interacts with MGRN1, but does not undergo MGRN1-mediated ubiquitination; this interaction competes with GNAS-binding and thus inhibits agonist-induced cAMP production. Interacts with OPN3; the interaction results in a decrease in MC1R-mediated cAMP signaling and ultimately a decrease in melanin production in melanocytes.

The protein localises to the cell membrane. Functionally, receptor for MSH (alpha, beta and gamma) and ACTH. The activity of this receptor is mediated by G proteins which activate adenylate cyclase. Mediates melanogenesis, the production of eumelanin (black/brown) and phaeomelanin (red/yellow), via regulation of cAMP signaling in melanocytes. This is Melanocyte-stimulating hormone receptor (MC1R) from Chlorocebus aethiops (Green monkey).